We begin with the raw amino-acid sequence, 217 residues long: Elongation factor Ts (217 aa).

An involved in Mg(2+) ion dislocation from EF-Tu region spans residues Thr80–Val83.

The protein belongs to the EF-Ts family.

The protein resides in the cytoplasm. Its function is as follows. Associates with the EF-Tu.GDP complex and induces the exchange of GDP to GTP. It remains bound to the aminoacyl-tRNA.EF-Tu.GTP complex up to the GTP hydrolysis stage on the ribosome. The chain is Elongation factor Ts from Carboxydothermus hydrogenoformans (strain ATCC BAA-161 / DSM 6008 / Z-2901).